A 171-amino-acid chain; its full sequence is MGLGVESKLGDSIVTTRLDHAVNWGRSYSLWPMAFGTACCGIEFMAVAGAKYDVSRFGAEVVRFSPRQADLLIVAGTISYKQAPILKKIYEQMCEPKWVISMGACACSGGFYDNYTTVQGIDEIIPVDEYVAGCPPRPEAVLDAIMRIQEKAKTESIIKDRVKEYKGFLDA.

The [4Fe-4S] cluster site is built by C39, C40, C105, and C134.

Belongs to the complex I 20 kDa subunit family. NDH-1 is composed of 14 different subunits. Subunits NuoB, C, D, E, F, and G constitute the peripheral sector of the complex. The cofactor is [4Fe-4S] cluster.

Its subcellular location is the cell inner membrane. The enzyme catalyses a quinone + NADH + 5 H(+)(in) = a quinol + NAD(+) + 4 H(+)(out). Its function is as follows. NDH-1 shuttles electrons from NADH, via FMN and iron-sulfur (Fe-S) centers, to quinones in the respiratory chain. The immediate electron acceptor for the enzyme in this species is believed to be ubiquinone. Couples the redox reaction to proton translocation (for every two electrons transferred, four hydrogen ions are translocated across the cytoplasmic membrane), and thus conserves the redox energy in a proton gradient. In Aliarcobacter butzleri (strain RM4018) (Arcobacter butzleri), this protein is NADH-quinone oxidoreductase subunit B.